Reading from the N-terminus, the 70-residue chain is Small ribosomal subunit protein bS21A (70 aa).

Belongs to the bacterial ribosomal protein bS21 family.

The chain is Small ribosomal subunit protein bS21A (rpsU1) from Burkholderia mallei (strain ATCC 23344).